The chain runs to 230 residues: Protein tumorous testis (230 aa).

Positions 37–128 (GELFLSCIPR…RELVLKNVES (92 aa)) constitute an RRM domain.

As to quaternary structure, part of a complex composed of at least tut, bam and bgcn; complex formation does not require RNA. Interacts with bam (via N-terminus); the interaction is direct. Interacts with bgcn; the interaction is indirect and is mediated by bam. As part of the bam-bgcn-tut complex associates with twin; may recruit the CCR4-NOT1 deadenylation complex to mRNA 3'UTRs to mediate post-transcriptional regulation of expression.

The protein resides in the cytoplasm. In terms of biological role, RNA binding protein that forms a complex with bam and bgcn, involved in 3'UTR-dependent regulation of a subset of mRNAs. Preferentially binds a long isoform of mei-P26 transcripts. Involved in 3'UTR-dependent post-transcriptional repression of several 3'-RNA processing factors. Involved in promoting germline stem cell lineage differentiation and mitosis-to-meiosis transition. Required for proper transit amplification of spermatogonia. This is Protein tumorous testis from Drosophila melanogaster (Fruit fly).